The chain runs to 513 residues: 2-isopropylmalate synthase (513 aa).

One can recognise a Pyruvate carboxyltransferase domain in the interval 5–267 (LVIFDTTLRD…ETRIDTTQIV (263 aa)). Residues aspartate 14, histidine 202, histidine 204, and asparagine 238 each coordinate Mn(2+). Positions 393–513 (KLVYSRVCSE…LDKVKAQGGV (121 aa)) are regulatory domain.

It belongs to the alpha-IPM synthase/homocitrate synthase family. LeuA type 1 subfamily. As to quaternary structure, homodimer. Requires Mn(2+) as cofactor.

The protein resides in the cytoplasm. The enzyme catalyses 3-methyl-2-oxobutanoate + acetyl-CoA + H2O = (2S)-2-isopropylmalate + CoA + H(+). The protein operates within amino-acid biosynthesis; L-leucine biosynthesis; L-leucine from 3-methyl-2-oxobutanoate: step 1/4. In terms of biological role, catalyzes the condensation of the acetyl group of acetyl-CoA with 3-methyl-2-oxobutanoate (2-ketoisovalerate) to form 3-carboxy-3-hydroxy-4-methylpentanoate (2-isopropylmalate). This is 2-isopropylmalate synthase from Dechloromonas aromatica (strain RCB).